Reading from the N-terminus, the 263-residue chain is Proteasome subunit alpha type-1 (263 aa).

N-acetylmethionine is present on M1. Phosphoserine; alternate is present on S110. O-linked (GlcNAc) serine; alternate glycosylation is present at S110. K115 participates in a covalent cross-link: Glycyl lysine isopeptide (Lys-Gly) (interchain with G-Cter in ubiquitin). S177 bears the Phosphoserine mark. K208 participates in a covalent cross-link: Glycyl lysine isopeptide (Lys-Gly) (interchain with G-Cter in ubiquitin). Residues 232–263 are disordered; it reads FLEGLEERPQRKAQPAQPADEPAEKADEPMEH. The span at 253–263 shows a compositional bias: basic and acidic residues; sequence PAEKADEPMEH.

It belongs to the peptidase T1A family. The 26S proteasome consists of a 20S proteasome core and two 19S regulatory subunits. The 20S proteasome core is a barrel-shaped complex made of 28 subunits that are arranged in four stacked rings. The two outer rings are each formed by seven alpha subunits, and the two inner rings are formed by seven beta subunits. The proteolytic activity is exerted by three beta-subunits PSMB5, PSMB6 and PSMB7. Interacts with NOTCH3. Interacts with ZFAND1.

It is found in the cytoplasm. The protein resides in the nucleus. Functionally, component of the 20S core proteasome complex involved in the proteolytic degradation of most intracellular proteins. This complex plays numerous essential roles within the cell by associating with different regulatory particles. Associated with two 19S regulatory particles, forms the 26S proteasome and thus participates in the ATP-dependent degradation of ubiquitinated proteins. The 26S proteasome plays a key role in the maintenance of protein homeostasis by removing misfolded or damaged proteins that could impair cellular functions, and by removing proteins whose functions are no longer required. Associated with the PA200 or PA28, the 20S proteasome mediates ubiquitin-independent protein degradation. This type of proteolysis is required in several pathways including spermatogenesis (20S-PA200 complex) or generation of a subset of MHC class I-presented antigenic peptides (20S-PA28 complex). The chain is Proteasome subunit alpha type-1 (PSMA1) from Macaca fascicularis (Crab-eating macaque).